We begin with the raw amino-acid sequence, 371 residues long: o-succinylbenzoate synthase (371 aa).

K164 (proton donor) is an active-site residue. D189, E214, and D239 together coordinate Mg(2+). The active-site Proton acceptor is the K263.

This sequence belongs to the mandelate racemase/muconate lactonizing enzyme family. MenC type 2 subfamily. It depends on a divalent metal cation as a cofactor.

The enzyme catalyses (1R,6R)-6-hydroxy-2-succinyl-cyclohexa-2,4-diene-1-carboxylate = 2-succinylbenzoate + H2O. It participates in quinol/quinone metabolism; 1,4-dihydroxy-2-naphthoate biosynthesis; 1,4-dihydroxy-2-naphthoate from chorismate: step 4/7. The protein operates within quinol/quinone metabolism; menaquinone biosynthesis. In terms of biological role, converts 2-succinyl-6-hydroxy-2,4-cyclohexadiene-1-carboxylate (SHCHC) to 2-succinylbenzoate (OSB). Does not show detectable N-acylamino acid racemase (NAAAR) activity with N-acetyl-S-methionine as substrate. This Bacillus subtilis (strain 168) protein is o-succinylbenzoate synthase.